A 151-amino-acid chain; its full sequence is D-aminoacyl-tRNA deacylase (151 aa).

The Gly-cisPro motif, important for rejection of L-amino acids motif lies at 136-137 (GP).

It belongs to the DTD family. Homodimer.

It is found in the cytoplasm. It carries out the reaction glycyl-tRNA(Ala) + H2O = tRNA(Ala) + glycine + H(+). The enzyme catalyses a D-aminoacyl-tRNA + H2O = a tRNA + a D-alpha-amino acid + H(+). An aminoacyl-tRNA editing enzyme that deacylates mischarged D-aminoacyl-tRNAs. Also deacylates mischarged glycyl-tRNA(Ala), protecting cells against glycine mischarging by AlaRS. Acts via tRNA-based rather than protein-based catalysis; rejects L-amino acids rather than detecting D-amino acids in the active site. By recycling D-aminoacyl-tRNA to D-amino acids and free tRNA molecules, this enzyme counteracts the toxicity associated with the formation of D-aminoacyl-tRNA entities in vivo and helps enforce protein L-homochirality. This chain is D-aminoacyl-tRNA deacylase, found in Lactococcus lactis subsp. cremoris (strain SK11).